Reading from the N-terminus, the 367-residue chain is Histidinol-phosphate aminotransferase (367 aa).

Lys-221 is subject to N6-(pyridoxal phosphate)lysine.

Belongs to the class-II pyridoxal-phosphate-dependent aminotransferase family. Histidinol-phosphate aminotransferase subfamily. Homodimer. Pyridoxal 5'-phosphate is required as a cofactor.

The catalysed reaction is L-histidinol phosphate + 2-oxoglutarate = 3-(imidazol-4-yl)-2-oxopropyl phosphate + L-glutamate. It functions in the pathway amino-acid biosynthesis; L-histidine biosynthesis; L-histidine from 5-phospho-alpha-D-ribose 1-diphosphate: step 7/9. This Erythrobacter litoralis (strain HTCC2594) protein is Histidinol-phosphate aminotransferase.